A 66-amino-acid polypeptide reads, in one-letter code: Large ribosomal subunit protein bL31 (66 aa).

Residues Cys-16, Cys-18, Cys-36, and Cys-39 each contribute to the Zn(2+) site.

It belongs to the bacterial ribosomal protein bL31 family. Type A subfamily. In terms of assembly, part of the 50S ribosomal subunit. It depends on Zn(2+) as a cofactor.

Its function is as follows. Binds the 23S rRNA. This is Large ribosomal subunit protein bL31 from Geobacillus sp. (strain WCH70).